The following is a 211-amino-acid chain: Mediator of RNA polymerase II transcription subunit 20 (211 aa).

Belongs to the Mediator complex subunit 20 family. Component of the Mediator complex.

Its subcellular location is the nucleus. Its function is as follows. Component of the Mediator complex, a coactivator involved in the regulated transcription of nearly all RNA polymerase II-dependent genes. Mediator functions as a bridge to convey information from gene-specific regulatory proteins to the basal RNA polymerase II transcription machinery. Mediator is recruited to promoters by direct interactions with regulatory proteins and serves as a scaffold for the assembly of a functional preinitiation complex with RNA polymerase II and the general transcription factors. This is Mediator of RNA polymerase II transcription subunit 20 (MED20) from Gallus gallus (Chicken).